We begin with the raw amino-acid sequence, 412 residues long: Transcription factor IIIA (412 aa).

Positions 1 to 20 (MSESDETKSISSLISSSSSS) are disordered. A compositionally biased stretch (low complexity) spans 9 to 20 (SISSLISSSSSS). 7 C2H2-type zinc fingers span residues 25-49 (YICTYEGCDKAYNRPSLLEQHLRTH), 55-79 (YKCTVEDCDKAFFRKSHLETHIVSH), 85-107 (FHCSVCGKGVNSRQHLKRHEITH), 111-136 (FKCTFENCQEAFYKHQSLRHHILSVH), 140-162 (LTCKQCNKVFTRPSKLAQHKLKH), 169-194 (YQCDHPGCFKNFQTWSVLQFHIKQSH), and 197-219 (LKCPKCGKGCVGKKGLSSHMLSH). The C2H2-type 8; degenerate zinc-finger motif lies at 228–252 (WTCDYCDVGKFAKKNELVEHYNIFH). The interval 285-316 (LETEKLKVEEDEEDEEDSLDEKRSDVRSDSMS) is disordered. The span at 293–303 (EEDEEDEEDSL) shows a compositional bias: acidic residues. The segment at 345-369 (INCPKNNCDRMFSREYDLRRHLKWH) adopts a C2H2-type 9 zinc-finger fold.

Its subcellular location is the nucleus. Functionally, transcription factor required for transcription of 5S rRNA by RNA polymerase III. This is Transcription factor IIIA (PZF1) from Candida albicans (strain SC5314 / ATCC MYA-2876) (Yeast).